Consider the following 129-residue polypeptide: NADPH-dependent 7-cyano-7-deazaguanine reductase (129 aa).

Cysteine 34 serves as the catalytic Thioimide intermediate. The active-site Proton donor is aspartate 41. Substrate is bound by residues 56 to 58 (VEL) and 75 to 76 (HE).

The protein belongs to the GTP cyclohydrolase I family. QueF type 1 subfamily.

The protein resides in the cytoplasm. The enzyme catalyses 7-aminomethyl-7-carbaguanine + 2 NADP(+) = 7-cyano-7-deazaguanine + 2 NADPH + 3 H(+). It functions in the pathway tRNA modification; tRNA-queuosine biosynthesis. In terms of biological role, catalyzes the NADPH-dependent reduction of 7-cyano-7-deazaguanine (preQ0) to 7-aminomethyl-7-deazaguanine (preQ1). In Nitrosococcus oceani (strain ATCC 19707 / BCRC 17464 / JCM 30415 / NCIMB 11848 / C-107), this protein is NADPH-dependent 7-cyano-7-deazaguanine reductase.